The chain runs to 340 residues: Insulin gene enhancer protein ISL-2B (340 aa).

LIM zinc-binding domains follow at residues 9–62 and 71–125; these read CVGC…CKRD and CAKC…RADH. Residues 172-231 constitute a DNA-binding region (homeobox); that stretch reads TTRVRTVLNEKQLHTLRTCYNANPRPDALMKEQLVEMTGLSPRVIRVWFQNKRCKDKKRT. Low complexity predominate over residues 307–317; that stretch reads ESGSMGNSSGS. The disordered stretch occupies residues 307 to 340; it reads ESGSMGNSSGSDVTSLSSQLPDTPNSMVPSPMDT. Residues 318-340 show a composition bias toward polar residues; it reads DVTSLSSQLPDTPNSMVPSPMDT.

It is found in the nucleus. Binds to one of the cis-acting domain of the insulin gene enhancer. May be involved in subtype specialization of primary motoneurons. This Oncorhynchus tshawytscha (Chinook salmon) protein is Insulin gene enhancer protein ISL-2B (isl2b).